The chain runs to 218 residues: 7-cyano-7-deazaguanine synthase (218 aa).

ATP is bound at residue 9 to 19 (FSGGMDSFTVL). Cys-185, Cys-193, Cys-196, and Cys-199 together coordinate Zn(2+).

The protein belongs to the QueC family. The cofactor is Zn(2+).

The catalysed reaction is 7-carboxy-7-deazaguanine + NH4(+) + ATP = 7-cyano-7-deazaguanine + ADP + phosphate + H2O + H(+). It functions in the pathway purine metabolism; 7-cyano-7-deazaguanine biosynthesis. Functionally, catalyzes the ATP-dependent conversion of 7-carboxy-7-deazaguanine (CDG) to 7-cyano-7-deazaguanine (preQ(0)). The polypeptide is 7-cyano-7-deazaguanine synthase (Pseudoalteromonas atlantica (strain T6c / ATCC BAA-1087)).